Here is a 436-residue protein sequence, read N- to C-terminus: MIMKFVEKYFEFEKYGTNLKVETLAGITTFMTMAYIIFVNPQILSTAGMDFGAVMVATCIASAIATLVMGLYARYPFALAPGMGLNAYFTYGVCLGMGIDWRVALGAVFISGVLFIILTLTKIRTWIFNVIPNAIKYGTAVGIGLFIAFIGLKSAGIIVSSKATLVTLGNLMEPSTLLALFGIFLTSILVSRNVIGAILIGIIVTSLIGMILGISPFPEGIFSMPPSIAPTFLQLDIMGALNLGLLTIVLAFFFVDMFDTLGTLSALASQAGYLDKDGKLPRVEKALMADATGTVVGSLLGTSTVTTYIESASGIALGGRTGFVSVVVAMLFLLSLFFYPVVKAIPPYATAAALVIVGALMMRSVKYIDFDDYTEAIPAFITLLTIPLTFSIATGLALGFITYPILKVFTGRWKEVHWLVYVLAVIFALRFVYLSG.

12 helical membrane-spanning segments follow: residues 24–44 (LAGI…PQIL), 51–71 (FGAV…VMGL), 79–99 (LAPG…GMGI), 103–123 (VALG…LTKI), 139–159 (TAVG…GIIV), 171–191 (LMEP…ILVS), 194–214 (VIGA…ILGI), 235–255 (LDIM…FFFV), 322–342 (GFVS…YPVV), 345–365 (IPPY…MRSV), 381–401 (ITLL…LGFI), and 416–436 (VHWL…YLSG).

It belongs to the nucleobase:cation symporter-2 (NCS2) (TC 2.A.40) family. Azg-like subfamily.

It is found in the cell membrane. The protein is Putative permease MJ0326 of Methanocaldococcus jannaschii (strain ATCC 43067 / DSM 2661 / JAL-1 / JCM 10045 / NBRC 100440) (Methanococcus jannaschii).